The following is a 223-amino-acid chain: Protein-L-isoaspartate O-methyltransferase (223 aa).

Serine 70 is a catalytic residue.

Belongs to the methyltransferase superfamily. L-isoaspartyl/D-aspartyl protein methyltransferase family.

It localises to the cytoplasm. It carries out the reaction [protein]-L-isoaspartate + S-adenosyl-L-methionine = [protein]-L-isoaspartate alpha-methyl ester + S-adenosyl-L-homocysteine. Catalyzes the methyl esterification of L-isoaspartyl residues in peptides and proteins that result from spontaneous decomposition of normal L-aspartyl and L-asparaginyl residues. It plays a role in the repair and/or degradation of damaged proteins. The protein is Protein-L-isoaspartate O-methyltransferase of Saccharophagus degradans (strain 2-40 / ATCC 43961 / DSM 17024).